Reading from the N-terminus, the 79-residue chain is Putative defensin-like protein 203 (79 aa).

The signal sequence occupies residues 1 to 27 (MAKLIVNFSALLMIILLVSNGLPKAVA). 4 disulfide bridges follow: cysteine 30–cysteine 79, cysteine 40–cysteine 64, cysteine 49–cysteine 73, and cysteine 53–cysteine 75.

The protein belongs to the DEFL family.

Its subcellular location is the secreted. The polypeptide is Putative defensin-like protein 203 (Arabidopsis thaliana (Mouse-ear cress)).